Consider the following 199-residue polypeptide: NAD(P)H dehydrogenase (quinone) (199 aa).

The region spanning 4 to 190 (VLVLYHSMYG…AIARFQGKHV (187 aa)) is the Flavodoxin-like domain. Residues 10–15 (SMYGHI) and 79–81 (TRF) each bind FMN. Tyr-12 provides a ligand contact to NAD(+). Substrate is bound at residue Trp-99. His-134 is an FMN binding site.

It belongs to the WrbA family. Requires FMN as cofactor.

It catalyses the reaction a quinone + NADH + H(+) = a quinol + NAD(+). The catalysed reaction is a quinone + NADPH + H(+) = a quinol + NADP(+). The chain is NAD(P)H dehydrogenase (quinone) from Tolumonas auensis (strain DSM 9187 / NBRC 110442 / TA 4).